The following is a 231-amino-acid chain: Large ribosomal subunit protein uL1 (231 aa).

This sequence belongs to the universal ribosomal protein uL1 family. In terms of assembly, part of the 50S ribosomal subunit.

Binds directly to 23S rRNA. The L1 stalk is quite mobile in the ribosome, and is involved in E site tRNA release. Its function is as follows. Protein L1 is also a translational repressor protein, it controls the translation of the L11 operon by binding to its mRNA. The protein is Large ribosomal subunit protein uL1 of Pseudomonas aeruginosa (strain LESB58).